The following is a 535-amino-acid chain: CTP synthase (535 aa).

Residues 1-267 are amidoligase domain; it reads MTKYIFVTGG…DQIVCDHLKL (267 aa). Position 13 (S13) interacts with CTP. S13 is a binding site for UTP. Residue 14–19 participates in ATP binding; sequence SLGKGI. Y54 is a binding site for L-glutamine. D71 contacts ATP. Residues D71 and E141 each coordinate Mg(2+). CTP contacts are provided by residues 148-150, 188-193, and K224; these read DIE and KTKPTQ. UTP contacts are provided by residues 188 to 193 and K224; that span reads KTKPTQ. Position 240 to 242 (240 to 242) interacts with ATP; the sequence is RDA. The Glutamine amidotransferase type-1 domain occupies 292–534; sequence KIALVGKYVE…VSASITNKES (243 aa). Position 354 (G354) interacts with L-glutamine. The Nucleophile; for glutamine hydrolysis role is filled by C381. Residues 382-385, E405, and R462 contribute to the L-glutamine site; that span reads LGMQ. Residues H507 and E509 contribute to the active site.

Belongs to the CTP synthase family. In terms of assembly, homotetramer.

The catalysed reaction is UTP + L-glutamine + ATP + H2O = CTP + L-glutamate + ADP + phosphate + 2 H(+). It catalyses the reaction L-glutamine + H2O = L-glutamate + NH4(+). The enzyme catalyses UTP + NH4(+) + ATP = CTP + ADP + phosphate + 2 H(+). Its pathway is pyrimidine metabolism; CTP biosynthesis via de novo pathway; CTP from UDP: step 2/2. Its activity is regulated as follows. Allosterically activated by GTP, when glutamine is the substrate; GTP has no effect on the reaction when ammonia is the substrate. The allosteric effector GTP functions by stabilizing the protein conformation that binds the tetrahedral intermediate(s) formed during glutamine hydrolysis. Inhibited by the product CTP, via allosteric rather than competitive inhibition. Its function is as follows. Catalyzes the ATP-dependent amination of UTP to CTP with either L-glutamine or ammonia as the source of nitrogen. Regulates intracellular CTP levels through interactions with the four ribonucleotide triphosphates. In Bacillus mycoides (strain KBAB4) (Bacillus weihenstephanensis), this protein is CTP synthase.